A 33-amino-acid polypeptide reads, in one-letter code: Potassium channel toxin alpha-KTx 10.4 (33 aa).

Intrachain disulfides connect cysteine 3/cysteine 22, cysteine 8/cysteine 27, and cysteine 12/cysteine 29.

The protein belongs to the short scorpion toxin superfamily. Potassium channel inhibitor family. Alpha-KTx 10 subfamily. In terms of tissue distribution, expressed by the venom gland.

Its subcellular location is the secreted. In terms of biological role, blocks human voltage-gated potassium channel Kv1.2/KCNA2 (IC(50)=3.6 nM) and Kv1.3/KCNA3 (IC(50)=72 nM). The chain is Potassium channel toxin alpha-KTx 10.4 from Centruroides tecomanus (Scorpion).